The following is a 132-amino-acid chain: MQVSEMKYGERAIQEGQLITFPNPRPGRQYTIEITLPEFTCKCPFSGYPDFATLYVSYIPHEKVVELKAIKLYINSYRDRYISHEEAVNQVLDDLVAACDPLYMKIKGDFAPRGNVHTVITVEHHRQTESLC.

Residue cysteine 43 is the Thioimide intermediate of the active site. The active-site Proton donor is the aspartate 50. Residues 65–67 (VEL) and 84–85 (HE) contribute to the substrate site.

Belongs to the GTP cyclohydrolase I family. QueF type 1 subfamily.

The protein resides in the cytoplasm. The enzyme catalyses 7-aminomethyl-7-carbaguanine + 2 NADP(+) = 7-cyano-7-deazaguanine + 2 NADPH + 3 H(+). Its pathway is tRNA modification; tRNA-queuosine biosynthesis. Functionally, catalyzes the NADPH-dependent reduction of 7-cyano-7-deazaguanine (preQ0) to 7-aminomethyl-7-deazaguanine (preQ1). This Thermosynechococcus vestitus (strain NIES-2133 / IAM M-273 / BP-1) protein is NADPH-dependent 7-cyano-7-deazaguanine reductase.